We begin with the raw amino-acid sequence, 189 residues long: Lipid A acyltransferase PagP (189 aa).

Positions 1-23 (MRLKLILYFLILSCYLGIGSARA) are cleaved as a signal peptide. Residues His-61, Asp-104, and Ser-105 contribute to the active site.

The protein belongs to the lipid A palmitoyltransferase family. Homodimer.

It localises to the cell outer membrane. The catalysed reaction is a lipid A + a 1,2-diacyl-sn-glycero-3-phosphocholine = a hepta-acyl lipid A + a 2-acyl-sn-glycero-3-phosphocholine. It carries out the reaction a lipid IVA + a 1,2-diacyl-sn-glycero-3-phosphocholine = a lipid IVB + a 2-acyl-sn-glycero-3-phosphocholine. The enzyme catalyses a lipid IIA + a 1,2-diacyl-sn-glycero-3-phosphocholine = a lipid IIB + a 2-acyl-sn-glycero-3-phosphocholine. Functionally, transfers a fatty acid residue from the sn-1 position of a phospholipid to the N-linked hydroxyfatty acid chain on the proximal unit of lipid A or its precursors. This Erwinia tasmaniensis (strain DSM 17950 / CFBP 7177 / CIP 109463 / NCPPB 4357 / Et1/99) protein is Lipid A acyltransferase PagP.